Consider the following 389-residue polypeptide: MQASRSATRHLLRHATRPPSGFVCRSCLSRRSSSTSASPRSPPPPPPTAGFTALKSRRLISVSGPDAAKYLQGVVTANIINNNKTGFYTAFLNAQGRVLHDVFIYPDASKDGEGFLIEVDATEAERLTRHIKRYKLRAKLNLRLLDDGEATVWQAWDDSKADFAPAVGMTTPVRDPRSPMLGYRVLTPGDHAQTPQLDLDPTPETSYRIRRYLQGVAEGQTEILREHALPAESNMDVTGAIDFRKGCYVGQELTIRTRHRGVVRKRILPCVLYDHFAAPERLEYKHDGVVTAEGVPPETSIGRATKRGRSTGKWLSGVGNIGLALCRLEIMTDLTLPGEPAAALESGNDEFVLTPKSDEDVGSEGAPFKVKAFVPDWLRQGLAAQTAGH.

Residues M1–S20 form a disordered region. The transit peptide at M1–R40 directs the protein to the mitochondrion. The segment covering A7–T16 has biased composition (basic residues).

It belongs to the GcvT family. CAF17/IBA57 subfamily.

The protein resides in the mitochondrion matrix. The chain is Iron-sulfur cluster assembly factor IBA57 homolog, mitochondrial (CAF17) from Pyricularia oryzae (strain 70-15 / ATCC MYA-4617 / FGSC 8958) (Rice blast fungus).